Consider the following 507-residue polypeptide: Pyridoxine 4-oxidase (507 aa).

The active-site Proton acceptor is H448.

Belongs to the GMC oxidoreductase family. Monomer. The cofactor is FAD.

The catalysed reaction is pyridoxine + O2 = pyridoxal + H2O2. Its pathway is cofactor degradation; B6 vitamer degradation; pyridoxal from pyridoxine (oxidase route): step 1/1. This Microbacterium luteolum (Aureobacterium luteolum) protein is Pyridoxine 4-oxidase (pno).